The primary structure comprises 154 residues: 6,7-dimethyl-8-ribityllumazine synthase (154 aa).

5-amino-6-(D-ribitylamino)uracil contacts are provided by residues phenylalanine 22, 56 to 58 (AFE), and 80 to 82 (AVI). Residue 85–86 (AT) participates in (2S)-2-hydroxy-3-oxobutyl phosphate binding. Residue histidine 88 is the Proton donor of the active site. 5-amino-6-(D-ribitylamino)uracil is bound at residue phenylalanine 113. Arginine 127 contributes to the (2S)-2-hydroxy-3-oxobutyl phosphate binding site.

Belongs to the DMRL synthase family. Forms an icosahedral capsid composed of 60 subunits, arranged as a dodecamer of pentamers.

It carries out the reaction (2S)-2-hydroxy-3-oxobutyl phosphate + 5-amino-6-(D-ribitylamino)uracil = 6,7-dimethyl-8-(1-D-ribityl)lumazine + phosphate + 2 H2O + H(+). Its pathway is cofactor biosynthesis; riboflavin biosynthesis; riboflavin from 2-hydroxy-3-oxobutyl phosphate and 5-amino-6-(D-ribitylamino)uracil: step 1/2. In terms of biological role, catalyzes the formation of 6,7-dimethyl-8-ribityllumazine by condensation of 5-amino-6-(D-ribitylamino)uracil with 3,4-dihydroxy-2-butanone 4-phosphate. This is the penultimate step in the biosynthesis of riboflavin. This Geobacillus thermodenitrificans (strain NG80-2) protein is 6,7-dimethyl-8-ribityllumazine synthase.